The chain runs to 318 residues: MSPVLSESQLRDFKHTLESSKIPFRSEVRLGILSSFKIGGVCPVIVEPEISSQVSEILHIFSKFDIPWKILGGGSNLLISDHPDNFVTLRLSGKFKEFVSLGDGKFKIGAATNTTPTFRQISQLGYTGAEFLSTIPGWTGGAVIQNAGCYGGELFDLIESVEFLRNGEVFVRKPSEIKYGYRFTEFLNQKDSIILGIEILLKEGNLEEIESSLKDKRDRRNSSQPENKKSAGSVFKNPKVFREDGKEIKAWELLDQAGLRGQIKGGAQISPEHCNFIVNLGTATASDVHYLIDLVVDRVYQTSGILLNREIEFFGDIP.

In terms of domain architecture, FAD-binding PCMH-type spans 38 to 204 (IGGVCPVIVE…LGIEILLKEG (167 aa)). The active site involves R182. Positions 212-229 (SLKDKRDRRNSSQPENKK) are enriched in basic and acidic residues. A disordered region spans residues 212–232 (SLKDKRDRRNSSQPENKKSAG). S233 (proton donor) is an active-site residue. E310 is a catalytic residue.

It belongs to the MurB family. The cofactor is FAD.

It is found in the cytoplasm. It catalyses the reaction UDP-N-acetyl-alpha-D-muramate + NADP(+) = UDP-N-acetyl-3-O-(1-carboxyvinyl)-alpha-D-glucosamine + NADPH + H(+). It functions in the pathway cell wall biogenesis; peptidoglycan biosynthesis. In terms of biological role, cell wall formation. The polypeptide is UDP-N-acetylenolpyruvoylglucosamine reductase (Leptospira interrogans serogroup Icterohaemorrhagiae serovar copenhageni (strain Fiocruz L1-130)).